Consider the following 342-residue polypeptide: Ribosomal RNA small subunit methyltransferase C (342 aa).

It belongs to the methyltransferase superfamily. RsmC family. As to quaternary structure, monomer.

It is found in the cytoplasm. The enzyme catalyses guanosine(1207) in 16S rRNA + S-adenosyl-L-methionine = N(2)-methylguanosine(1207) in 16S rRNA + S-adenosyl-L-homocysteine + H(+). In terms of biological role, specifically methylates the guanine in position 1207 of 16S rRNA in the 30S particle. This chain is Ribosomal RNA small subunit methyltransferase C, found in Shewanella piezotolerans (strain WP3 / JCM 13877).